Consider the following 366-residue polypeptide: Mitogen-activated protein kinase 13 (366 aa).

The Protein kinase domain occupies 25 to 308 (YLAPAHVGSG…AAQALAHPFF (284 aa)). ATP contacts are provided by residues 31–39 (VGSGAYGAV) and K54. Residue D150 is the Proton acceptor of the active site. Position 180 is a phosphothreonine; by MAP2K3, MAP2K4, MAP2K6 and MAP2K7 (T180). Residues 180–182 (TGY) carry the TXY motif. Y182 bears the Phosphotyrosine mark. A Phosphoserine modification is found at S350.

It belongs to the protein kinase superfamily. CMGC Ser/Thr protein kinase family. MAP kinase subfamily. As to quaternary structure, interacts with MAPK8IP2. It depends on Mg(2+) as a cofactor. Post-translationally, dually phosphorylated on Thr-180 and Tyr-182 by MAP2K3/MKK3, MAP2K4/MKK4, MAP2K6/MKK6 and MAP2K7/MKK7, which activates the enzyme. Dephosphorylated by dual specificity phosphatase DUSP1.

The catalysed reaction is L-seryl-[protein] + ATP = O-phospho-L-seryl-[protein] + ADP + H(+). It catalyses the reaction L-threonyl-[protein] + ATP = O-phospho-L-threonyl-[protein] + ADP + H(+). With respect to regulation, activated by phosphorylation on threonine and tyrosine by dual specificity kinases, MAP2K3/MKK3, MAP2K6/MKK6, MAP2K4/MKK4 and MAP2K7/MKK7. Activation by ultraviolet radiation, hyperosmotic shock, anisomycin or by TNF-alpha is mediated by MAP2K3/MKK3. Inhibited by dual specificity phosphatase DUSP1. Functionally, serine/threonine kinase which acts as an essential component of the MAP kinase signal transduction pathway. MAPK13 is one of the four p38 MAPKs which play an important role in the cascades of cellular responses evoked by extracellular stimuli such as pro-inflammatory cytokines or physical stress leading to direct activation of transcription factors such as ELK1 and ATF2. Accordingly, p38 MAPKs phosphorylate a broad range of proteins and it has been estimated that they may have approximately 200 to 300 substrates each. MAPK13 is one of the less studied p38 MAPK isoforms. Some of the targets are downstream kinases such as MAPKAPK2, which are activated through phosphorylation and further phosphorylate additional targets. Plays a role in the regulation of protein translation by phosphorylating and inactivating EEF2K. Involved in cytoskeletal remodeling through phosphorylation of MAPT and STMN1. Mediates UV irradiation induced up-regulation of the gene expression of CXCL14. Plays an important role in the regulation of epidermal keratinocyte differentiation, apoptosis and skin tumor development. Phosphorylates the transcriptional activator MYB in response to stress which leads to rapid MYB degradation via a proteasome-dependent pathway. MAPK13 also phosphorylates and down-regulates PRKD1 during regulation of insulin secretion in pancreatic beta cells. The polypeptide is Mitogen-activated protein kinase 13 (Mapk13) (Mus musculus (Mouse)).